The primary structure comprises 274 residues: MAIHLYKTSTPSTRNGTVDSQVKSNPRNNLIYGQHHCGKGRNARGIITARHRGGGHKRLYRKIDFRRNEKDIYGRIVTIEYDPNRNAYICLIHYGDGEKRYILHPRGAIIGDTIVSGTEVPIKMGNALPLTDMPLGTAIHNIEITLGKGGQLARAAGAVAKLIAKEGKSATLKLPSGEVRLISKNCSATVGQVGNVGVNQKSLGRAGSKRWLGKRPVVRGVVMNPVDHPHGGGEGRAPIGRKKPTTPWGYPALGRRSRKRNKYSDNLILRRRSK.

Disordered stretches follow at residues 1 to 24 (MAIHLYKTSTPSTRNGTVDSQVKS) and 223 to 274 (MNPV…RRSK). Residues 7–24 (KTSTPSTRNGTVDSQVKS) are compositionally biased toward polar residues.

This sequence belongs to the universal ribosomal protein uL2 family. Part of the 50S ribosomal subunit.

It is found in the plastid. Its subcellular location is the chloroplast. This Nicotiana sylvestris (Wood tobacco) protein is Large ribosomal subunit protein uL2cz/uL2cy (rpl2-A).